The following is a 936-amino-acid chain: Isoleucine--tRNA ligase (936 aa).

The 'HIGH' region signature appears at 58–68 (PYANGNIHIGH). Glu560 lines the L-isoleucyl-5'-AMP pocket. Positions 601-605 (KMSKS) match the 'KMSKS' region motif. Lys604 contacts ATP. Zn(2+) contacts are provided by Cys899, Cys902, Cys919, and Cys922.

This sequence belongs to the class-I aminoacyl-tRNA synthetase family. IleS type 1 subfamily. In terms of assembly, monomer. Zn(2+) serves as cofactor.

It localises to the cytoplasm. The catalysed reaction is tRNA(Ile) + L-isoleucine + ATP = L-isoleucyl-tRNA(Ile) + AMP + diphosphate. Catalyzes the attachment of isoleucine to tRNA(Ile). As IleRS can inadvertently accommodate and process structurally similar amino acids such as valine, to avoid such errors it has two additional distinct tRNA(Ile)-dependent editing activities. One activity is designated as 'pretransfer' editing and involves the hydrolysis of activated Val-AMP. The other activity is designated 'posttransfer' editing and involves deacylation of mischarged Val-tRNA(Ile). The sequence is that of Isoleucine--tRNA ligase from Proteus mirabilis (strain HI4320).